The primary structure comprises 822 residues: Microcephalin (822 aa).

The region spanning 10–99 (AFLKDVVAYV…ALVDESLFPA (90 aa)) is the BRCT 1 domain. Disordered regions lie at residues 182–203 (MKEKRENLSPTSSQMLEQSQQN), 219–243 (PLSSDESFASGSHSSFGDSCGDQER), and 266–295 (SSFYGSASPNHLRQPRPQKAPDSPSKESIN). 2 stretches are compositionally biased toward polar residues: residues 189–203 (LSPTSSQMLEQSQQN) and 219–235 (PLSSDESFASGSHSSFG). Phosphoserine is present on residues Ser-273, Ser-290, and Ser-327. Thr-329 is subject to Phosphothreonine. Disordered regions lie at residues 335-366 (EHQVRLGPKNSSAKRKRAADLGSSPKGKLKKR), 498-567 (NDSP…SPED), and 594-636 (TGYS…PTRT). The span at 522–541 (HPDTLSSSAHHITPLKGNST) shows a compositional bias: polar residues. Composition is skewed to basic and acidic residues over residues 542 to 553 (ETRDPGDGKGSP) and 625 to 634 (KKSEKEEKPT). 2 consecutive BRCT domains span residues 627 to 717 (SEKE…PFEL) and 738 to 820 (YQGT…NYQL).

As to quaternary structure, interacts with CDC27 and maybe other components of the APC/C complex. Interacts with histone variant H2AX under DNA damage conditions. In terms of tissue distribution, high levels of expression are found in the developing forebrain and, in particular, in the walls of the lateral ventricles.

The protein localises to the cytoplasm. It localises to the cytoskeleton. The protein resides in the microtubule organizing center. Its subcellular location is the centrosome. Implicated in chromosome condensation and DNA damage induced cellular responses. May play a role in neurogenesis and regulation of the size of the cerebral cortex. The sequence is that of Microcephalin from Mus musculus (Mouse).